Consider the following 172-residue polypeptide: Putative phosphoesterase BC_1225 (172 aa).

His34 (proton donor) is an active-site residue. 2 short sequence motifs (HXTX) span residues 34–37 (HITL) and 115–118 (HLTI). The active-site Proton acceptor is the His115.

This sequence belongs to the 2H phosphoesterase superfamily. YjcG family.

The sequence is that of Putative phosphoesterase BC_1225 from Bacillus cereus (strain ATCC 14579 / DSM 31 / CCUG 7414 / JCM 2152 / NBRC 15305 / NCIMB 9373 / NCTC 2599 / NRRL B-3711).